A 402-amino-acid chain; its full sequence is Arabinosyltransferase RRA1 (402 aa).

Residues methionine 1–glutamate 13 lie on the Cytoplasmic side of the membrane. Residues cysteine 14–isoleucine 34 traverse the membrane as a helical; Signal-anchor for type II membrane protein segment. Residues proline 35–serine 402 lie on the Lumenal side of the membrane. The short motif at aspartate 225–aspartate 227 is the DXD motif element. N-linked (GlcNAc...) asparagine glycosylation is present at asparagine 253.

It belongs to the glycosyltransferase 77 family. As to expression, expressed in leaf meristem and at points of cauline leaf attachments on the primary stem. Expressed at low levels in siliques.

Its subcellular location is the golgi apparatus membrane. In terms of biological role, plays a role in the arabinosylation of cell wall components. Involved in the arabinosylation of extensin proteins in root hair cells. Extensins are structural glycoproteins present in cell walls and its arabinosylation is important for root hair cell development. The sequence is that of Arabinosyltransferase RRA1 from Arabidopsis thaliana (Mouse-ear cress).